The primary structure comprises 314 residues: GDP-L-fucose synthase (314 aa).

Residues 15-21 and 109-112 contribute to the NADP(+) site; these read GHKGMVG and LGSS. The active-site Proton donor/acceptor is Tyr140. NADP(+)-binding positions include Lys144, 167–170, and His183; that span reads PTNL. The substrate site is built by Lys191, Trp206, Arg213, and Asp273.

Belongs to the NAD(P)-dependent epimerase/dehydratase family. Fucose synthase subfamily.

The catalysed reaction is GDP-beta-L-fucose + NADP(+) = GDP-4-dehydro-alpha-D-rhamnose + NADPH + H(+). The protein operates within nucleotide-sugar biosynthesis; GDP-L-fucose biosynthesis via de novo pathway; GDP-L-fucose from GDP-alpha-D-mannose: step 2/2. Catalyzes the two-step NADP-dependent conversion of GDP-4-dehydro-6-deoxy-D-mannose to GDP-fucose, involving an epimerase and a reductase reaction. In Sinorhizobium fredii (strain NBRC 101917 / NGR234), this protein is GDP-L-fucose synthase.